The primary structure comprises 394 residues: Elongation factor Tu (394 aa).

A tr-type G domain is found at 10 to 204; sequence LPHVNIGTIG…AVDEYIPTPT (195 aa). A G1 region spans residues 19–26; it reads GHVDHGKT. 19–26 serves as a coordination point for GTP; sequence GHVDHGKT. T26 contributes to the Mg(2+) binding site. The G2 stretch occupies residues 60–64; it reads GITIN. The interval 81-84 is G3; sequence DCPG. Residues 81–85 and 136–139 each bind GTP; these read DCPGH and NKCD. Residues 136 to 139 are G4; the sequence is NKCD. Positions 174–176 are G5; it reads SAL.

Belongs to the TRAFAC class translation factor GTPase superfamily. Classic translation factor GTPase family. EF-Tu/EF-1A subfamily. In terms of assembly, monomer.

The protein resides in the cytoplasm. The enzyme catalyses GTP + H2O = GDP + phosphate + H(+). In terms of biological role, GTP hydrolase that promotes the GTP-dependent binding of aminoacyl-tRNA to the A-site of ribosomes during protein biosynthesis. In Mesoplasma florum (strain ATCC 33453 / NBRC 100688 / NCTC 11704 / L1) (Acholeplasma florum), this protein is Elongation factor Tu.